We begin with the raw amino-acid sequence, 649 residues long: Acetyl-coenzyme A synthetase (649 aa).

Residues 191–194 (RGGR), Thr312, and Asn336 each bind CoA. ATP is bound by residues 388 to 390 (GEP), 412 to 417 (DTWWQT), Asp501, and Arg516. CoA is bound at residue Ser524. Arg527 lines the ATP pocket. 3 residues coordinate Mg(2+): Val538, His540, and Val543. Residue Arg585 coordinates CoA. N6-acetyllysine is present on Lys610.

The protein belongs to the ATP-dependent AMP-binding enzyme family. The cofactor is Mg(2+). In terms of processing, acetylated. Deacetylation by the SIR2-homolog deacetylase activates the enzyme.

It catalyses the reaction acetate + ATP + CoA = acetyl-CoA + AMP + diphosphate. In terms of biological role, catalyzes the conversion of acetate into acetyl-CoA (AcCoA), an essential intermediate at the junction of anabolic and catabolic pathways. AcsA undergoes a two-step reaction. In the first half reaction, AcsA combines acetate with ATP to form acetyl-adenylate (AcAMP) intermediate. In the second half reaction, it can then transfer the acetyl group from AcAMP to the sulfhydryl group of CoA, forming the product AcCoA. This chain is Acetyl-coenzyme A synthetase, found in Marinobacter nauticus (strain ATCC 700491 / DSM 11845 / VT8) (Marinobacter aquaeolei).